Reading from the N-terminus, the 1845-residue chain is Helicase swr-1 (1845 aa).

The segment covering methionine 1–aspartate 13 has biased composition (polar residues). Positions methionine 1 to lysine 329 are disordered. Over residues asparagine 24–aspartate 38 the composition is skewed to low complexity. Polar residues predominate over residues serine 63–asparagine 84. The segment covering serine 98–serine 108 has biased composition (low complexity). Basic and acidic residues predominate over residues proline 168–alanine 180. The span at alanine 216–lysine 243 shows a compositional bias: polar residues. 2 stretches are compositionally biased toward pro residues: residues lysine 248–alanine 258 and proline 283–proline 292. The HSA domain occupies proline 418–arginine 493. 2 disordered regions span residues glutamine 539–glycine 713 and glutamate 749–threonine 935. Acidic residues predominate over residues aspartate 549 to leucine 565. Over residues glycine 574–glutamine 585 the composition is skewed to basic and acidic residues. Composition is skewed to acidic residues over residues glycine 586–aspartate 608 and asparagine 663–proline 704. 2 stretches are compositionally biased toward polar residues: residues threonine 762 to glutamate 777 and threonine 815 to leucine 834. The span at serine 888–threonine 897 shows a compositional bias: low complexity. Positions threonine 898–histidine 909 are enriched in basic and acidic residues. Positions arginine 922–valine 933 are enriched in polar residues. One can recognise a Helicase ATP-binding domain in the interval alanine 957 to proline 1122. ATP is bound at residue aspartate 970–threonine 977. A DEAH box motif is present at residues aspartate 1073–histidine 1076. The Helicase C-terminal domain occupies alanine 1510 to threonine 1660. Disordered regions lie at residues threonine 1702–arginine 1724, glutamine 1751–glutamate 1783, and leucine 1816–arginine 1845. Gly residues predominate over residues glycine 1704–alanine 1718. Low complexity predominate over residues aspartate 1769–glycine 1781. Positions aspartate 1826 to arginine 1845 are enriched in basic residues.

This sequence belongs to the SNF2/RAD54 helicase family. SWR1 subfamily. Component of the SWR1 chromatin-remodeling complex.

The protein localises to the nucleus. It catalyses the reaction ATP + H2O = ADP + phosphate + H(+). Functionally, catalytic component of the SWR1 complex which mediates the ATP-dependent exchange of histone H2A for the H2A variant H2A.Z leading to transcriptional regulation of selected genes by chromatin remodeling. This is Helicase swr-1 (crf1-1) from Neurospora crassa (strain ATCC 24698 / 74-OR23-1A / CBS 708.71 / DSM 1257 / FGSC 987).